We begin with the raw amino-acid sequence, 285 residues long: Nucleotide-binding protein Psyr_4150 (285 aa).

8-15 (GRSGSGKS) contacts ATP. 60–63 (DARN) serves as a coordination point for GTP.

The protein belongs to the RapZ-like family.

In terms of biological role, displays ATPase and GTPase activities. In Pseudomonas syringae pv. syringae (strain B728a), this protein is Nucleotide-binding protein Psyr_4150.